The primary structure comprises 501 residues: NAD(P)H-quinone oxidoreductase chain 4, chloroplastic (501 aa).

14 consecutive transmembrane segments (helical) span residues 4-24, 35-55, 87-107, 113-133, 134-154, 167-187, 211-231, 242-262, 274-294, 310-330, 331-351, 386-406, 416-436, and 464-484; these read FPWL…IPFF, YTLG…CYYF, IGLI…AWPV, LFYF…ASQD, ILLF…LLCI, FILY…TMGF, IILY…FPLH, HYST…YGLI, SIFA…AALI, ISHM…GLNG, AILQ…LAGI, LALP…GIVV, ILVT…LLSM, and IFIL…PNSV.

The protein belongs to the complex I subunit 4 family.

The protein resides in the plastid. It localises to the chloroplast thylakoid membrane. The enzyme catalyses a plastoquinone + NADH + (n+1) H(+)(in) = a plastoquinol + NAD(+) + n H(+)(out). It carries out the reaction a plastoquinone + NADPH + (n+1) H(+)(in) = a plastoquinol + NADP(+) + n H(+)(out). The polypeptide is NAD(P)H-quinone oxidoreductase chain 4, chloroplastic (Physcomitrium patens (Spreading-leaved earth moss)).